Consider the following 300-residue polypeptide: Protein SPEAR2 (300 aa).

Residues 1-11 are compositionally biased toward polar residues; it reads MCSNNNTSSGS. The interval 1-64 is disordered; sequence MCSNNNTSSG…PPLSSSPSLP (64 aa). Over residues 25–38 the composition is skewed to basic residues; it reads CRKKQKKDKVRRRG. The SPL signature appears at 37 to 45; the sequence is RGPGVAELE. The segment covering 43-54 has biased composition (basic and acidic residues); sequence ELEKIRLQEEYK. Low complexity predominate over residues 55–64; the sequence is PPLSSSPSLP. An EAR motif is present at residues 294–300; that stretch reads IDLNLKL.

As to quaternary structure, homodimer and heterodimer with SPL and SPEARs. Interacts with SPL, SPEAR1, SPEAR3 and SPEAR4. Expressed in leaves.

In terms of biological role, adapter-like transcriptional repressor recruiting TPL/TPR corepressors to inhibit TCP transcription factors. May be involved in leaf development. In Arabidopsis thaliana (Mouse-ear cress), this protein is Protein SPEAR2.